We begin with the raw amino-acid sequence, 891 residues long: Tubulin polyglutamylase TTLL6 (891 aa).

Disordered regions lie at residues 1 to 25 (MGAL…SSPA) and 44 to 106 (SQAR…KRKK). The span at 63 to 76 (SEEKGDSSKEDPKE) shows a compositional bias: basic and acidic residues. Positions 88 to 99 (GAQNGLQNAQQQ) are enriched in low complexity. A TTL domain is found at 106–449 (KKRLVINLSS…ESCDKKKVLE (344 aa)). ATP-binding positions include K223, 229–230 (QG), 251–254 (QLYI), and 264–266 (KFD). Q229 serves as a coordination point for a protein. R290 lines the L-glutamate pocket. 312–313 (TN) is a binding site for ATP. Positions 314, 315, and 332 each coordinate L-glutamate. The Mg(2+) site is built by D395, E408, and N410. H411 provides a ligand contact to a protein. A c-MTBD region region spans residues 420–499 (RLDKEVKDGL…CGGFRLIYPS (80 aa)). Position 426 (K426) interacts with L-glutamate. Disordered regions lie at residues 546–584 (QMKK…ATQA), 607–636 (GERK…LTSA), 687–711 (TTPE…TASS), and 800–820 (NNLS…DSSG). A compositionally biased stretch (polar residues) spans 687-699 (TTPESTTQLSISP).

This sequence belongs to the tubulin--tyrosine ligase family. Found in a complex with CEP41. It depends on Mg(2+) as a cofactor.

Its subcellular location is the cytoplasm. It is found in the cytoskeleton. The protein resides in the cilium axoneme. The protein localises to the cilium basal body. It catalyses the reaction L-glutamyl-[protein] + L-glutamate + ATP = gamma-L-glutamyl-L-glutamyl-[protein] + ADP + phosphate + H(+). The enzyme catalyses (L-glutamyl)(n)-gamma-L-glutamyl-L-glutamyl-[protein] + L-glutamate + ATP = (L-glutamyl)(n+1)-gamma-L-glutamyl-L-glutamyl-[protein] + ADP + phosphate + H(+). In terms of biological role, polyglutamylase which modifies both tubulin and non-tubulin proteins, generating alpha-linked polyglutamate side chains on the gamma-carboxyl group of specific glutamate residues of target proteins. Preferentially mediates ATP-dependent long polyglutamate chain elongation over the initiation step of the polyglutamylation reaction. Preferentially modifies the alpha-tubulin tail over a beta-tail. Promotes tubulin polyglutamylation which stimulates spastin/SPAST-mediated microtubule severing, thereby regulating microtubule functions. Mediates microtubule polyglutamylation in primary cilia axoneme, which is important for ciliary structural formation and motility. Mediates microtubule polyglutamylation in motile cilia, necessary for the regulation of ciliary coordinated beating. Polyglutamylates non-tubulin protein nucleotidyltransferase CGAS, leading to CGAS DNA-binding inhibition, thereby preventing antiviral defense response. The protein is Tubulin polyglutamylase TTLL6 of Homo sapiens (Human).